Here is a 270-residue protein sequence, read N- to C-terminus: Regulatory protein RecX (270 aa).

Belongs to the RecX family.

The protein localises to the cytoplasm. Functionally, modulates RecA activity. This is Regulatory protein RecX from Bacillus thuringiensis subsp. konkukian (strain 97-27).